Consider the following 164-residue polypeptide: Ecotin (164 aa).

The N-terminal stretch at 1–20 (MKMFVPAVVFAALASASAWA) is a signal peptide. The cysteines at positions 72 and 109 are disulfide-linked.

Belongs to the protease inhibitor I11 (ecotin) family. As to quaternary structure, homodimer.

The protein localises to the periplasm. Its function is as follows. General inhibitor of pancreatic serine proteases: inhibits chymotrypsin, trypsin, elastases, factor X, kallikrein as well as a variety of other proteases. The polypeptide is Ecotin (Salmonella paratyphi A (strain ATCC 9150 / SARB42)).